The chain runs to 204 residues: Small ribosomal subunit protein uS3 (204 aa).

The region spanning 37–105 (IRSYINESFK…NVEVNVVGVK (69 aa)) is the KH type-2 domain.

The protein belongs to the universal ribosomal protein uS3 family. In terms of assembly, part of the 30S ribosomal subunit. Forms a tight complex with proteins S10 and S14.

Binds the lower part of the 30S subunit head. Binds mRNA in the 70S ribosome, positioning it for translation. The sequence is that of Small ribosomal subunit protein uS3 from Wolbachia pipientis wMel.